Reading from the N-terminus, the 174-residue chain is ATP synthase subunit delta, sodium ion specific (174 aa).

Belongs to the ATPase delta chain family. In terms of assembly, F-type ATPases have 2 components, F(1) - the catalytic core - and F(0) - the membrane proton channel. F(1) has five subunits: alpha(3), beta(3), gamma(1), delta(1), epsilon(1). F(0) has three main subunits: a(1), b(2) and c(10-14). The alpha and beta chains form an alternating ring which encloses part of the gamma chain. F(1) is attached to F(0) by a central stalk formed by the gamma and epsilon chains, while a peripheral stalk is formed by the delta and b chains.

The protein localises to the cell inner membrane. F(1)F(0) ATP synthase produces ATP from ADP in the presence of a proton or sodium gradient. F-type ATPases consist of two structural domains, F(1) containing the extramembraneous catalytic core and F(0) containing the membrane proton channel, linked together by a central stalk and a peripheral stalk. During catalysis, ATP synthesis in the catalytic domain of F(1) is coupled via a rotary mechanism of the central stalk subunits to proton translocation. Functionally, this protein is part of the stalk that links CF(0) to CF(1). It either transmits conformational changes from CF(0) to CF(1) or is implicated in proton conduction. This chain is ATP synthase subunit delta, sodium ion specific, found in Propionigenium modestum.